The chain runs to 570 residues: Formate--tetrahydrofolate ligase (570 aa).

T65–T72 is a binding site for ATP.

It belongs to the formate--tetrahydrofolate ligase family.

It carries out the reaction (6S)-5,6,7,8-tetrahydrofolate + formate + ATP = (6R)-10-formyltetrahydrofolate + ADP + phosphate. It functions in the pathway one-carbon metabolism; tetrahydrofolate interconversion. The polypeptide is Formate--tetrahydrofolate ligase (Shewanella halifaxensis (strain HAW-EB4)).